The primary structure comprises 284 residues: NAD(P)H-hydrate epimerase (284 aa).

Residues 1–55 (MSGLRTLLGLGLLVSSSRFPRVVARGGPRCPGPAWWAARPMHLGDSTMAGGTVKY) constitute a mitochondrion transit peptide. Positions 61-271 (AQAVDEELFN…DLEKKYQLNL (211 aa)) constitute a YjeF N-terminal domain. (6S)-NADPHX is bound at residue 115-119 (NNGGD). Asn116 provides a ligand contact to K(+). At Lys140 the chain carries N6-succinyllysine. Residue Asp181 participates in K(+) binding. (6S)-NADPHX is bound by residues 185–191 (GFSFKGA) and Asp214. K(+) is bound at residue Ser217.

This sequence belongs to the NnrE/AIBP family. In terms of assembly, homodimer. Interacts with APOA1 and APOA2. K(+) serves as cofactor. Undergoes physiological phosphorylation during sperm capacitation, downstream to PKA activation.

The protein resides in the mitochondrion. It is found in the secreted. The enzyme catalyses (6R)-NADHX = (6S)-NADHX. It catalyses the reaction (6R)-NADPHX = (6S)-NADPHX. Its function is as follows. Catalyzes the epimerization of the S- and R-forms of NAD(P)HX, a damaged form of NAD(P)H that is a result of enzymatic or heat-dependent hydration. This is a prerequisite for the S-specific NAD(P)H-hydrate dehydratase to allow the repair of both epimers of NAD(P)HX. Accelerates cholesterol efflux from endothelial cells to high-density lipoprotein (HDL) and thereby regulates angiogenesis. The polypeptide is NAD(P)H-hydrate epimerase (Monodelphis domestica (Gray short-tailed opossum)).